The primary structure comprises 457 residues: uncharacterized protein (457 aa).

12 consecutive transmembrane segments (helical) span residues 18 to 38 (VMTVAGATVGFGATWRFPYLV), 44 to 64 (GAYVLLFCIAMIVIGIPMILV), 101 to 121 (MGLLGAFGIMAYYMVLGGWVI), 158 to 178 (IIFYTLLFVIVNYIILAKGII), 188 to 208 (LMPLLFIFLIGMVIRNVTLPG), 228 to 248 (LFIFVLGQVFFALSLGFGVLI), 273 to 293 (IIAVLAGFMIFPSLFTFGIEP), 294 to 314 (NAGPTLVFQSLPIVFSHLWAG), 316 to 336 (FFAIIFFGLLLIAALTTSITI), 355 to 375 (AIVLTLSGIFLLGNIPAILGD), 396 to 416 (SGNILFMLTALGCAIFVGFVL), and 433 to 453 (IKIWFNYVKFVVPLIILVIFI).

This sequence belongs to the sodium:neurotransmitter symporter (SNF) (TC 2.A.22) family.

The protein localises to the cell membrane. Functionally, putative sodium-dependent transporter. This is an uncharacterized protein from Haemophilus influenzae (strain ATCC 51907 / DSM 11121 / KW20 / Rd).